Reading from the N-terminus, the 155-residue chain is MAEKMNVESFNLDHTKVKAPFVRLAGTKVGLHGDEIYKYDVRFKQPNKEHMEMPALHSLEHLMAELARNHTDKVVDISPMGCQTGFYMSFINFSDYDDALDVLAKTLADVLEAKEVPACNEVQCGWAASHSLEGAKELAEEFLAKRSEWKNVFGE.

3 residues coordinate Fe cation: histidine 57, histidine 61, and cysteine 124.

It belongs to the LuxS family. As to quaternary structure, homodimer. Fe cation is required as a cofactor.

It catalyses the reaction S-(5-deoxy-D-ribos-5-yl)-L-homocysteine = (S)-4,5-dihydroxypentane-2,3-dione + L-homocysteine. Involved in the synthesis of autoinducer 2 (AI-2) which is secreted by bacteria and is used to communicate both the cell density and the metabolic potential of the environment. The regulation of gene expression in response to changes in cell density is called quorum sensing. Catalyzes the transformation of S-ribosylhomocysteine (RHC) to homocysteine (HC) and 4,5-dihydroxy-2,3-pentadione (DPD). This chain is S-ribosylhomocysteine lyase, found in Listeria monocytogenes serotype 4a (strain HCC23).